A 570-amino-acid polypeptide reads, in one-letter code: Ribosome-inactivating protein SNAI (570 aa).

The first 28 residues, 1 to 28 (MRLVAKLLYLAVLAICGLGIHGALTHPR), serve as a signal peptide directing secretion. Asparagine 40, asparagine 62, and asparagine 144 each carry an N-linked (GlcNAc...) asparagine glycan. The active site involves glutamate 199. Residue asparagine 260 is glycosylated (N-linked (GlcNAc...) asparagine). Disulfide bonds link cysteine 284–cysteine 316, cysteine 332–cysteine 351, and cysteine 373–cysteine 385. 2 consecutive Ricin B-type lectin domains span residues 319–439 (VEVT…WTVG) and 441–566 (VEPL…WITT). The stretch at 329-369 (DGLCVDVRYGHYIDGNPVQLRPCGNECNQLWTFRTDGTIRW) is one 1-alpha repeat. The 1-beta repeat unit spans residues 370–405 (LGKCLTASSSVMIYDCNTVPPEATKWVVSIDGTITN). The stretch at 408-440 (SGLVLTAPQAAEGTALSLENNIHAARQGWTVGD) is one 1-gamma repeat. One copy of the 2-alpha repeat lies at 452 to 489 (KQMCLRENGENNFVWLEDCVLNRVQQEWALYGDGTIRV). A disulfide bond links cysteine 455 and cysteine 470. An N-linked (GlcNAc...) asparagine glycan is attached at asparagine 492. Residues 493-531 (RSLCVTSEDHEPSDLIVILKCEGSGNQRWVFNTNGTISN) form a 2-beta repeat. A disulfide bond links cysteine 496 and cysteine 513. N-linked (GlcNAc...) asparagine glycosylation occurs at asparagine 526. Residues 534–567 (AKLLMDVAQRDVSLRKIILYRPTGNPNQQWITTT) form a 2-gamma repeat.

This sequence belongs to the ribosome-inactivating protein family. Type 2 RIP subfamily. Tetramer of four pairs of disulfide bound A-B chains. The precursor is processed in two chains, A and B, that are linked by a disulfide bond. A small truncated form corresponding roughly to the second ricin B-type lectin domain of the B chain, TrSNAI, can also be produced. Post-translationally, glycosylated. N-glycans of subunit A are (Man)2-3(Xyl)(GlcNAc)2(Fuc) at Asn-40, (GlcNAc)0-2(Man)3(Xyl)(GlcNAc)2(Fuc) or (Man)1-2(GlcNAc)2 at Asn-62, (Man)3(Xyl)(GlcNAc)2(Fuc)0-1 at Asn-144 and (GlcNAc)0-1(Man)3(Xyl)(GlcNAc)2(Fuc) at Asn-260. N-glycans of subunit B are (Man)3(Xyl)(GlcNAc)2(Fuc) at Asn-492 and (Man)6-9(GlcNAc)2 at Asn-526. Expressed in bark.

It catalyses the reaction Endohydrolysis of the N-glycosidic bond at one specific adenosine on the 28S rRNA.. Functionally, neu5Ac(alpha2-6)Gal/GalNAc specific agglutinin. Behaves as a type-2 ribosome-inactivating protein. Strongly inhibits mammalian but not plant ribosomes. The A chain is responsible for inhibiting protein synthesis through the catalytic inactivation of 60S ribosomal subunits by removing adenine from position 4,324 of 28S rRNA. The B chain binds to cell receptors and probably facilitates the entry into the cell of the A chain; B chains are also responsible for cell agglutination (lectin activity). Involved in plant defense against insects. In terms of biological role, binds Neu5Ac(alpha2-6)Gal/GalNAc but has no clear agglutination activity. This is Ribosome-inactivating protein SNAI from Sambucus nigra (European elder).